A 101-amino-acid polypeptide reads, in one-letter code: Chaperone modulatory protein CbpM (101 aa).

It belongs to the CbpM family.

In terms of biological role, interacts with CbpA and inhibits both the DnaJ-like co-chaperone activity and the DNA binding activity of CbpA. Together with CbpA, modulates the activity of the DnaK chaperone system. Does not inhibit the co-chaperone activity of DnaJ. This is Chaperone modulatory protein CbpM from Pseudomonas putida (strain ATCC 47054 / DSM 6125 / CFBP 8728 / NCIMB 11950 / KT2440).